The primary structure comprises 366 residues: Class I histocompatibility antigen, Gogo-C*0203 alpha chain (366 aa).

The first 24 residues, 1-24, serve as a signal peptide directing secretion; sequence MRVMAPRTLILLLSGALALTETWA. An alpha-1 region spans residues 25 to 114; it reads GSHSMRYFYT…LRGYYNQSED (90 aa). The Extracellular segment spans residues 25 to 308; the sequence is GSHSMRYFYT…EPSSQPTIPI (284 aa). The N-linked (GlcNAc...) asparagine glycan is linked to asparagine 110. The interval 115–206 is alpha-2; sequence GSHTLQSMYG…ENGKETLQRA (92 aa). 2 cysteine pairs are disulfide-bonded: cysteine 125–cysteine 188 and cysteine 227–cysteine 283. The tract at residues 207–298 is alpha-3; it reads EPPKTHVTHH…GLPEPLTLRW (92 aa). Positions 209–297 constitute an Ig-like C1-type domain; the sequence is PKTHVTHHPL…EGLPEPLTLR (89 aa). The segment at 299–308 is connecting peptide; that stretch reads EPSSQPTIPI. Residues 309–332 form a helical membrane-spanning segment; the sequence is VGIVVGLAVLVVLAVLGAVVTAMM. Topologically, residues 333–366 are cytoplasmic; the sequence is CRRKSSGGKGGSCSQAACSNSAQGSDESLITCKA.

This sequence belongs to the MHC class I family. Heterodimer of an alpha chain and a beta chain (beta-2-microglobulin).

Its subcellular location is the membrane. Involved in the presentation of foreign antigens to the immune system. This chain is Class I histocompatibility antigen, Gogo-C*0203 alpha chain, found in Gorilla gorilla gorilla (Western lowland gorilla).